The primary structure comprises 115 residues: Dolichyl-diphosphooligosaccharide--protein glycosyltransferase subunit DAD1 (115 aa).

The Cytoplasmic segment spans residues 1–31 (MVKSTSKDAQDLFRSLRSAYSATPTNLKIID). Residues 32 to 52 (LYVVFAVFTALIQVVYMALVG) form a helical membrane-spanning segment. The Lumenal portion of the chain corresponds to 53 to 55 (SFP). The chain crosses the membrane as a helical span at residues 56-76 (FNSFLSGVLSCIGTAVLAVCL). Residues 77–94 (RIQVNKENKEFKDLAPER) lie on the Cytoplasmic side of the membrane. The chain crosses the membrane as a helical span at residues 95–115 (AFADFVLCNLVLHLVIINFLG).

This sequence belongs to the DAD/OST2 family. As to quaternary structure, component of the oligosaccharyltransferase (OST) complex. In terms of tissue distribution, ubiquitous.

It is found in the endoplasmic reticulum membrane. It participates in protein modification; protein glycosylation. Functionally, subunit of the oligosaccharyl transferase (OST) complex that catalyzes the initial transfer of a defined glycan (Glc(3)Man(9)GlcNAc(2) in eukaryotes) from the lipid carrier dolichol-pyrophosphate to an asparagine residue within an Asn-X-Ser/Thr consensus motif in nascent polypeptide chains, the first step in protein N-glycosylation. N-glycosylation occurs cotranslationally and the complex associates with the Sec61 complex at the channel-forming translocon complex that mediates protein translocation across the endoplasmic reticulum (ER). All subunits are required for a maximal enzyme activity. The sequence is that of Dolichyl-diphosphooligosaccharide--protein glycosyltransferase subunit DAD1 (DAD1) from Arabidopsis thaliana (Mouse-ear cress).